Consider the following 1021-residue polypeptide: Collagenase ColH (1021 aa).

Residues 1–30 (MKRKCLSKRLMLAITMATIFTVNSTLPIYA) form the signal peptide. Residues 31 to 40 (AVDKNNATAA) constitute a propeptide that is removed on maturation. The interval 41–320 (VQNESKRYTV…SADQIKRHYD (280 aa)) is activator domain. Residues 41-717 (VQNESKRYTV…TYDVVFHGYL (677 aa)) form an S1 metalloprotease domain region. Positions 330-601 (PLDKFKKEGK…MQERIDNYEN (272 aa)) are catalytic subdomain. Position 421 (Asp421) interacts with Zn(2+). A Ca(2+)-binding site is contributed by Glu430. Position 455 (His455) interacts with Zn(2+). The active site involves Glu456. His459 is a Zn(2+) binding site. Ca(2+) is bound by residues Gly463, Val467, and Gly469. Glu487 contributes to the Zn(2+) binding site. Residues 609-721 (DDYLVRHAYK…VFHGYLPNEG (113 aa)) form a helper subdomain region. The tract at residues 718-810 (PNEGDSKNSL…VSTTTAEIKD (93 aa)) is S2a domain. The Ca(2+) site is built by Asn725, Ser726, Asp753, Asp755, Asp794, Asn814, Lys815, Asp842, Asp844, Asp884, Glu908, Glu910, Asn912, Asn913, Thr931, Asp937, Gln938, and Asp939. The PKD 1 domain maps to 727-808 (LPYGKINGTY…SSVSTTTAEI (82 aa)). The S2b domain stretch occupies residues 811-904 (LSENKLPVIY…KIKITDPVYP (94 aa)). The 90-residue stretch at 816-905 (LPVIYMHVPK…IKITDPVYPI (90 aa)) folds into the PKD 2 domain. The segment at 903 to 922 (YPIGTEKEPNNSKETASGPI) is disordered. An S3 collagen-binding domain region spans residues 905–1021 (IGTEKEPNNS…RINIEGSVGR (117 aa)). A collagen-binding region spans residues 1002 to 1004 (YMF).

It belongs to the peptidase M9B family. Collagenase subfamily. Ca(2+) is required as a cofactor. Requires Zn(2+) as cofactor. In terms of processing, upon purification gives rise to 98 kDa, 105 kDa and 116 kDa (full-length) proteins, all of which have the same N-terminus.

It is found in the secreted. It carries out the reaction Digestion of native collagen in the triple helical region at Xaa-|-Gly bonds. With synthetic peptides, a preference is shown for Gly at P3 and P1', Pro and Ala at P2 and P2', and hydroxyproline, Ala or Arg at P3'.. Inhibited by EDTA. Inhibited by 1-10-phenanthroline. Inhibited by broad-spectrum zinc metalloprotease inhibitor batimastat. N-aryl mercaptoacetamide-based inhibitors have been isolated that act on clostridial collagenases with submicromolar affinity while having negligibile activity on human collagenases. Clostridial collagenases are among the most efficient degraders of eukaryotic collagen known; saprophytes use collagen as a carbon source while pathogens additionally digest collagen to aid in host colonization. Has both tripeptidylcarboxypeptidase on Gly-X-Y and endopeptidase activities; the endopeptidase cuts within the triple helix region of collagen while tripeptidylcarboxypeptidase successively digests the exposed ends, thus clostridial collagenases can digest large sections of collagen. The full-length protein has collagenase activity, while both the 116 kDa and 98 kDa forms act on gelatin. In vitro digestion of soluble calf skin collagen fibrils requires both ColG and ColH; ColG forms missing the second collagen-binding domain is also synergistic with ColH, although their overall efficiency is decreased. Digestion of collagen requires Ca(2+) and is inhibited by EDTA. The activator domain (residues 119-388) and catalytic subdomain (330-601) open and close around substrate allowing digestion when the protein is closed. The polypeptide is Collagenase ColH (Hathewaya histolytica (Clostridium histolyticum)).